We begin with the raw amino-acid sequence, 452 residues long: Bifunctional protein GlmU (452 aa).

A pyrophosphorylase region spans residues 1-230 (MSRSRSAIIL…ADEVLGVNSR (230 aa)). UDP-N-acetyl-alpha-D-glucosamine-binding positions include 10–13 (LAAG), K24, Q75, and 80–81 (GT). D105 provides a ligand contact to Mg(2+). Residues G141, E156, N171, and N228 each coordinate UDP-N-acetyl-alpha-D-glucosamine. N228 contributes to the Mg(2+) binding site. The tract at residues 231-251 (ADLAEAEAAFQSRMRQSMMAD) is linker. Residues 252 to 452 (GVTLIAPETV…ARKARKDSQT (201 aa)) are N-acetyltransferase. R317 and K335 together coordinate UDP-N-acetyl-alpha-D-glucosamine. H347 acts as the Proton acceptor in catalysis. 2 residues coordinate UDP-N-acetyl-alpha-D-glucosamine: Y350 and N361. Residues A364, 370–371 (NY), S389, T407, and R424 contribute to the acetyl-CoA site.

This sequence in the N-terminal section; belongs to the N-acetylglucosamine-1-phosphate uridyltransferase family. In the C-terminal section; belongs to the transferase hexapeptide repeat family. As to quaternary structure, homotrimer. Mg(2+) serves as cofactor.

Its subcellular location is the cytoplasm. It carries out the reaction alpha-D-glucosamine 1-phosphate + acetyl-CoA = N-acetyl-alpha-D-glucosamine 1-phosphate + CoA + H(+). The catalysed reaction is N-acetyl-alpha-D-glucosamine 1-phosphate + UTP + H(+) = UDP-N-acetyl-alpha-D-glucosamine + diphosphate. Its pathway is nucleotide-sugar biosynthesis; UDP-N-acetyl-alpha-D-glucosamine biosynthesis; N-acetyl-alpha-D-glucosamine 1-phosphate from alpha-D-glucosamine 6-phosphate (route II): step 2/2. It functions in the pathway nucleotide-sugar biosynthesis; UDP-N-acetyl-alpha-D-glucosamine biosynthesis; UDP-N-acetyl-alpha-D-glucosamine from N-acetyl-alpha-D-glucosamine 1-phosphate: step 1/1. The protein operates within bacterial outer membrane biogenesis; LPS lipid A biosynthesis. Functionally, catalyzes the last two sequential reactions in the de novo biosynthetic pathway for UDP-N-acetylglucosamine (UDP-GlcNAc). The C-terminal domain catalyzes the transfer of acetyl group from acetyl coenzyme A to glucosamine-1-phosphate (GlcN-1-P) to produce N-acetylglucosamine-1-phosphate (GlcNAc-1-P), which is converted into UDP-GlcNAc by the transfer of uridine 5-monophosphate (from uridine 5-triphosphate), a reaction catalyzed by the N-terminal domain. This chain is Bifunctional protein GlmU, found in Maricaulis maris (strain MCS10) (Caulobacter maris).